The following is a 141-amino-acid chain: Nucleoside diphosphate kinase (141 aa).

ATP is bound by residues lysine 11, phenylalanine 59, arginine 87, threonine 93, arginine 104, and asparagine 114. The Pros-phosphohistidine intermediate role is filled by histidine 117.

It belongs to the NDK family. As to quaternary structure, homotetramer. Requires Mg(2+) as cofactor.

Its subcellular location is the cytoplasm. It catalyses the reaction a 2'-deoxyribonucleoside 5'-diphosphate + ATP = a 2'-deoxyribonucleoside 5'-triphosphate + ADP. The enzyme catalyses a ribonucleoside 5'-diphosphate + ATP = a ribonucleoside 5'-triphosphate + ADP. Its function is as follows. Major role in the synthesis of nucleoside triphosphates other than ATP. The ATP gamma phosphate is transferred to the NDP beta phosphate via a ping-pong mechanism, using a phosphorylated active-site intermediate. In Cupriavidus pinatubonensis (strain JMP 134 / LMG 1197) (Cupriavidus necator (strain JMP 134)), this protein is Nucleoside diphosphate kinase.